Consider the following 254-residue polypeptide: Very-long-chain (3R)-3-hydroxyacyl-CoA dehydratase 2 (254 aa).

The residue at position 2 (alanine 2) is an N-acetylalanine. Over alanine 2–tyrosine 41 the chain is Cytoplasmic. The interval lysine 11–glycine 33 is disordered. The segment covering glycine 12–glycine 21 has biased composition (gly residues). A helical membrane pass occupies residues leucine 42–leucine 60. Residues valine 61–lysine 79 lie on the Lumenal side of the membrane. Residues proline 80–isoleucine 97 form a helical membrane-spanning segment. The Cytoplasmic portion of the chain corresponds to glycine 98–threonine 107. The helical transmembrane segment at serine 108–valine 125 threads the bilayer. The Lumenal segment spans residues lysine 126–serine 130. Residues glutamate 131–isoleucine 146 traverse the membrane as a helical segment. Topologically, residues isoleucine 147–tyrosine 169 are cytoplasmic. Residues threonine 170–isoleucine 187 form a helical membrane-spanning segment. Residues tyrosine 176 and glutamate 183 contribute to the active site. Residues tyrosine 188–phenylalanine 217 are Lumenal-facing. The interval glycine 198–tyrosine 214 is may be involved in interaction with TECR. N-linked (GlcNAc...) asparagine glycosylation occurs at asparagine 209. A helical membrane pass occupies residues leucine 218–histidine 235. The Cytoplasmic segment spans residues methionine 236–glutamate 254.

This sequence belongs to the very long-chain fatty acids dehydratase HACD family. As to quaternary structure, may interact with enzymes of the ELO family (including ELOVL1); with those enzymes that mediate condensation, the first of the four steps of the reaction cycle responsible for fatty acids elongation, may be part of a larger fatty acids elongase complex. Interacts with BCAP31. Interacts (via the third lumenal loop) with TECR. As to expression, highly expressed in testis, spleen, prostate, colon and heart, followed by moderate expression in thymus, ovary, small intestine, peripheral blood leukocytes, liver, skeletal muscle and pancreas. Weakly detected in kidney, placenta, brain and lung.

Its subcellular location is the endoplasmic reticulum membrane. It catalyses the reaction a very-long-chain (3R)-3-hydroxyacyl-CoA = a very-long-chain (2E)-enoyl-CoA + H2O. It carries out the reaction (3R)-hydroxyhexadecanoyl-CoA = (2E)-hexadecenoyl-CoA + H2O. The catalysed reaction is (3R)-hydroxyoctadecanoyl-CoA = (2E)-octadecenoyl-CoA + H2O. The enzyme catalyses (3R)-hydroxyeicosanoyl-CoA = (2E)-eicosenoyl-CoA + H2O. It catalyses the reaction (3R)-hydroxydocosanoyl-CoA = (2E)-docosenoyl-CoA + H2O. It carries out the reaction (3R)-hydroxytetracosanoyl-CoA = (2E)-tetracosenoyl-CoA + H2O. The catalysed reaction is (3R)-hydroxyhexacosanoyl-CoA = (2E)-hexacosenoyl-CoA + H2O. The protein operates within lipid metabolism; fatty acid biosynthesis. Its function is as follows. Catalyzes the third of the very long-chain fatty acids (VLCFA) elongation four-step cycle (condensation, reduction, dehydration, and reduction). This endoplasmic reticulum-elongation process is characterized by the addition of two carbons to the lipid chain through each cycle. This enzyme catalyzes the dehydration of the 3-hydroxyacyl-CoA intermediate into trans-2,3-enoyl-CoA, within each cycle of elongation. Therefore, it participates in the production of various VLCFAs involved in multiple biological processes as precursors of membrane lipids and lipid mediators. This is Very-long-chain (3R)-3-hydroxyacyl-CoA dehydratase 2 from Homo sapiens (Human).